We begin with the raw amino-acid sequence, 164 residues long: Thiol peroxidase (164 aa).

Positions 18–163 (INEGDFAPDF…FDAALAAYKN (146 aa)) constitute a Thioredoxin domain. Cysteine 60 functions as the Cysteine sulfenic acid (-SOH) intermediate in the catalytic mechanism. Cysteines 60 and 93 form a disulfide.

This sequence belongs to the peroxiredoxin family. Tpx subfamily. As to quaternary structure, homodimer.

It carries out the reaction a hydroperoxide + [thioredoxin]-dithiol = an alcohol + [thioredoxin]-disulfide + H2O. Thiol-specific peroxidase that catalyzes the reduction of hydrogen peroxide and organic hydroperoxides to water and alcohols, respectively. Plays a role in cell protection against oxidative stress by detoxifying peroxides. The polypeptide is Thiol peroxidase (Staphylococcus aureus (strain MRSA252)).